Consider the following 57-residue polypeptide: Phosphatase RapH inhibitor (57 aa).

2 propeptides span residues 1–34 (MPIK…FKES) and 41–57 (YIDH…KALS). The disordered stretch occupies residues 26–57 (TNSGGFKESTDRNTTYIDHSPYKLSDQKKALS).

The protein belongs to the Phr family. Contains a predicted signal peptide cleavage site in the N-terminal region, however the propeptide is probably only subject to processing events at the ends of the mature peptide.

It is found in the secreted. Its subcellular location is the cytoplasm. In terms of biological role, signaling molecule involved the regulation of both sporulation and competence. Secreted during production, but the mature peptide acts intracellularly, indicating that it needs to be imported into the cell to function. Acts by inhibiting RapH activity. Can inhibit both RapH activities, the dephosphorylation of Spo0F and the sequestration of ComA. This chain is Phosphatase RapH inhibitor (phrH), found in Bacillus subtilis (strain 168).